Reading from the N-terminus, the 134-residue chain is UPF0102 protein SYNW1051 (134 aa).

This sequence belongs to the UPF0102 family.

The chain is UPF0102 protein SYNW1051 from Parasynechococcus marenigrum (strain WH8102).